The following is a 1114-amino-acid chain: Constitutive coactivator of PPAR-gamma-like protein 1 (1114 aa).

The interaction with YES1, SRC and FYN stretch occupies residues 339-402 (PPHYLARPNP…YNLAEPALTL (64 aa)). 2 disordered regions span residues 372–396 (QAKPVAPQVPSPGAPGQGPHPYNLA) and 411–519 (EQNY…GNQI). Positions 431–443 (SPINPAPSGSPNH) are enriched in polar residues. Positions 477 to 498 (GWEKTGSHSEPQARGDPGDQTK) are enriched in basic and acidic residues. Positions 499–510 (AEGSSTASSGSQ) are enriched in polar residues. Phosphothreonine is present on Thr-651. The RNA binding stretch occupies residues 825 to 1114 (AEQAAKVEKM…LEAAVLKKEE (290 aa)). Arg-869, Arg-880, and Arg-882 each carry omega-N-methylarginine. A disordered region spans residues 918–940 (FSGSDSSRTSKSQGGIQPIPSQG). Residue Lys-928 is modified to N6-acetyllysine. Over residues 929–940 (SQGGIQPIPSQG) the composition is skewed to low complexity. Ser-956 carries the phosphoserine modification. Omega-N-methylarginine is present on residues Arg-978 and Arg-982. Residues 1009 to 1099 (AIQGKPPYAA…LNALSTDSGC (91 aa)) form a disordered region. A Phosphoserine modification is found at Ser-1019. Over residues 1022 to 1033 (EVAKELKSRSGE) the composition is skewed to basic and acidic residues. The span at 1034 to 1043 (SKSSAMSSDG) shows a compositional bias: polar residues. A phosphoserine mark is found at Ser-1040, Ser-1041, and Ser-1044. Residues 1060-1097 (MNGSAGDTRAPSHSESALNNDSKTCNTNPHLNALSTDS) show a composition bias toward polar residues.

Belongs to the constitutive coactivator of PPAR-gamma family. As to quaternary structure, interacts with PURA. Interacts with YES1, SRC, FYN. Upon tyrosine phosphorylation, interacts with PIK3R1. Post-translationally, arg-978 is dimethylated, probably to asymmetric dimethylarginine. In terms of processing, phosphorylated on tyrosine by src family kinases upon ultraviolet exposure.

It localises to the cytoplasm. Its subcellular location is the cell membrane. In terms of biological role, component of the oxidative stress-induced survival signaling. May regulate the activation of SRC family protein kinases. May act as a scaffolding protein enabling SRC family protein kinases to phosphorylate and activate PI3-kinase. Binds IGF2 RNA and promotes the production of IGF2 protein. This chain is Constitutive coactivator of PPAR-gamma-like protein 1 (FAM120A), found in Bos taurus (Bovine).